A 246-amino-acid polypeptide reads, in one-letter code: Phosphomannomutase 2 (246 aa).

Position 2 is an N-acetylalanine (alanine 2). Aspartate 12 functions as the Nucleophile in the catalytic mechanism. Aspartate 12 and aspartate 14 together coordinate Mg(2+). The Proton donor/acceptor role is filled by aspartate 14. 6 residues coordinate alpha-D-mannose 1-phosphate: arginine 21, arginine 123, arginine 134, arginine 141, serine 179, and aspartate 181. Positions 209, 221, 223, and 226 each coordinate Mg(2+).

This sequence belongs to the eukaryotic PMM family. As to quaternary structure, homodimer.

Its subcellular location is the cytoplasm. It catalyses the reaction alpha-D-mannose 1-phosphate = D-mannose 6-phosphate. It functions in the pathway nucleotide-sugar biosynthesis; GDP-alpha-D-mannose biosynthesis; alpha-D-mannose 1-phosphate from D-fructose 6-phosphate: step 2/2. In terms of biological role, involved in the synthesis of the GDP-mannose and dolichol-phosphate-mannose required for a number of critical mannosyl transfer reactions. This Bos taurus (Bovine) protein is Phosphomannomutase 2 (PMM2).